Consider the following 501-residue polypeptide: Zinc finger protein 704 (501 aa).

Residues 80–96 (SLKSTCNGGQRDGLTQG) show a composition bias toward polar residues. Disordered stretches follow at residues 80–138 (SLKS…HTRS), 183–203 (PLVR…WKDG), and 216–267 (WSWS…LFDE). The span at 115–137 (EEPRVLEHKRTGRALETEKDHTR) shows a compositional bias: basic and acidic residues. A C2H2-type zinc finger spans residues 281 to 306 (FKCLWKNCGKVLSTAAGIQRHIRTVH). 4 disordered regions span residues 340-380 (SLSP…SRSA), 398-419 (PVTI…FSIS), 427-446 (FTGT…GEQH), and 453-472 (LSSP…GEGK). Residues 368-380 (SESSSSTPLSRSA) are compositionally biased toward low complexity. A CR1 motif is present at residues 472-476 (KKCRK). A CR2 motif is present at residues 490 to 494 (CRWKK).

Its subcellular location is the nucleus. Its function is as follows. Transcription factor. The chain is Zinc finger protein 704 (znf704) from Danio rerio (Zebrafish).